Here is a 660-residue protein sequence, read N- to C-terminus: Bifunctional polymyxin resistance protein ArnA (660 aa).

The interval 1-304 (MKAVVFAYHN…EMYLVEGMRF (304 aa)) is formyltransferase ArnAFT. The Proton donor; for formyltransferase activity role is filled by His104. Residues Arg114 and 136-140 (TVKPD) each bind (6R)-10-formyltetrahydrofolate. The interval 316–660 (RRQKVLIMGA…FLKTAVEETK (345 aa)) is dehydrogenase ArnADH. Residues Asp349 and 370 to 371 (DI) contribute to the NAD(+) site. Residues Ala395, Tyr400, and 434 to 435 (TS) contribute to the UDP-alpha-D-glucuronate site. The active-site Proton acceptor; for decarboxylase activity is the Glu436. UDP-alpha-D-glucuronate contacts are provided by residues Arg462, Asn494, 528–537 (KLIDGGEQKR), and Tyr615. Catalysis depends on Arg621, which acts as the Proton donor; for decarboxylase activity.

The protein in the N-terminal section; belongs to the Fmt family. UDP-L-Ara4N formyltransferase subfamily. This sequence in the C-terminal section; belongs to the NAD(P)-dependent epimerase/dehydratase family. UDP-glucuronic acid decarboxylase subfamily. Homohexamer, formed by a dimer of trimers.

The catalysed reaction is UDP-alpha-D-glucuronate + NAD(+) = UDP-beta-L-threo-pentopyranos-4-ulose + CO2 + NADH. It carries out the reaction UDP-4-amino-4-deoxy-beta-L-arabinose + (6R)-10-formyltetrahydrofolate = UDP-4-deoxy-4-formamido-beta-L-arabinose + (6S)-5,6,7,8-tetrahydrofolate + H(+). It participates in nucleotide-sugar biosynthesis; UDP-4-deoxy-4-formamido-beta-L-arabinose biosynthesis; UDP-4-deoxy-4-formamido-beta-L-arabinose from UDP-alpha-D-glucuronate: step 1/3. It functions in the pathway nucleotide-sugar biosynthesis; UDP-4-deoxy-4-formamido-beta-L-arabinose biosynthesis; UDP-4-deoxy-4-formamido-beta-L-arabinose from UDP-alpha-D-glucuronate: step 3/3. Its pathway is bacterial outer membrane biogenesis; lipopolysaccharide biosynthesis. Bifunctional enzyme that catalyzes the oxidative decarboxylation of UDP-glucuronic acid (UDP-GlcUA) to UDP-4-keto-arabinose (UDP-Ara4O) and the addition of a formyl group to UDP-4-amino-4-deoxy-L-arabinose (UDP-L-Ara4N) to form UDP-L-4-formamido-arabinose (UDP-L-Ara4FN). The modified arabinose is attached to lipid A and is required for resistance to polymyxin and cationic antimicrobial peptides. In Shewanella sediminis (strain HAW-EB3), this protein is Bifunctional polymyxin resistance protein ArnA.